The following is a 130-amino-acid chain: Cyclin-dependent kinase 4 inhibitor B (130 aa).

4 ANK repeats span residues 5-34 (GSDA…DPNA), 38-66 (FGRR…EPNC), 71-100 (TLTR…RLDV), and 104-130 (WGRL…ATGD). Residue Thr-12 is modified to Phosphothreonine.

Belongs to the CDKN2 cyclin-dependent kinase inhibitor family. Heterodimer of CDKN2B with CDK4 or CDK6. Expression abundant in lung, less abundant in testis, barely detectable in liver, and not detectable in neonatal kidney, adult kidney, brain, heart, or spleen.

Interacts strongly with CDK4 and CDK6. Potent inhibitor. Potential effector of TGF-beta induced cell cycle arrest. This is Cyclin-dependent kinase 4 inhibitor B (Cdkn2b) from Rattus norvegicus (Rat).